The sequence spans 225 residues: Cytidylate kinase (225 aa).

12-20 contacts ATP; the sequence is GPSGAGKGT.

It belongs to the cytidylate kinase family. Type 1 subfamily.

The protein localises to the cytoplasm. The enzyme catalyses CMP + ATP = CDP + ADP. It catalyses the reaction dCMP + ATP = dCDP + ADP. The chain is Cytidylate kinase from Edwardsiella ictaluri (strain 93-146).